Reading from the N-terminus, the 72-residue chain is Translation initiation factor IF-1 (72 aa).

Residues 1-72 (MAKEDNIEMQ…SKGRIVFRSR (72 aa)) enclose the S1-like domain.

It belongs to the IF-1 family. As to quaternary structure, component of the 30S ribosomal translation pre-initiation complex which assembles on the 30S ribosome in the order IF-2 and IF-3, IF-1 and N-formylmethionyl-tRNA(fMet); mRNA recruitment can occur at any time during PIC assembly.

It localises to the cytoplasm. In terms of biological role, one of the essential components for the initiation of protein synthesis. Stabilizes the binding of IF-2 and IF-3 on the 30S subunit to which N-formylmethionyl-tRNA(fMet) subsequently binds. Helps modulate mRNA selection, yielding the 30S pre-initiation complex (PIC). Upon addition of the 50S ribosomal subunit IF-1, IF-2 and IF-3 are released leaving the mature 70S translation initiation complex. This Klebsiella pneumoniae subsp. pneumoniae (strain ATCC 700721 / MGH 78578) protein is Translation initiation factor IF-1.